We begin with the raw amino-acid sequence, 247 residues long: Eukaryotic translation initiation factor 6 (247 aa).

Ser174 and Ser175 each carry phosphoserine; by CK1.

The protein belongs to the eIF-6 family. Monomer. Associates with the 60S ribosomal subunit. In terms of processing, phosphorylation at Ser-174 and Ser-175 promotes nuclear export.

It is found in the cytoplasm. It localises to the nucleus. The protein localises to the nucleolus. Functionally, binds to the 60S ribosomal subunit and prevents its association with the 40S ribosomal subunit to form the 80S initiation complex in the cytoplasm. Is also involved in ribosome biogenesis. Associates with pre-60S subunits in the nucleus and is involved in its nuclear export. This Emericella nidulans (strain FGSC A4 / ATCC 38163 / CBS 112.46 / NRRL 194 / M139) (Aspergillus nidulans) protein is Eukaryotic translation initiation factor 6 (tif6).